The sequence spans 234 residues: Zein-alpha 19B1 (234 aa).

A signal peptide spans 1–21 (MAAKIFCLLMLLGLSASAATA).

This sequence belongs to the zein family.

Its function is as follows. Zeins are major seed storage proteins. In Zea mays (Maize), this protein is Zein-alpha 19B1.